Consider the following 499-residue polypeptide: Putative protein phosphatase 2C 76 (499 aa).

Residues 1–34 form the signal peptide; the sequence is MRLGCSGRRRRLLRAALLRLVVLVLVAPPRRCAG. Residues 67–101 form a disordered region; it reads AGSGGEGDGDRRSSSSSPPPPPHPRGCHVAVDRGR. The 366-residue stretch at 92–457 folds into the PPM-type phosphatase domain; the sequence is GCHVAVDRGR…DNVAAVIVPL (366 aa). Positions 138 and 139 each coordinate Mn(2+). Positions 286–306 are disordered; it reads KKTSVVSGKRRRKRNSNNRDD. Residues aspartate 397 and aspartate 448 each contribute to the Mn(2+) site.

This sequence belongs to the PP2C family. The cofactor is Mg(2+). It depends on Mn(2+) as a cofactor.

It catalyses the reaction O-phospho-L-seryl-[protein] + H2O = L-seryl-[protein] + phosphate. The catalysed reaction is O-phospho-L-threonyl-[protein] + H2O = L-threonyl-[protein] + phosphate. This Oryza sativa subsp. japonica (Rice) protein is Putative protein phosphatase 2C 76.